The primary structure comprises 104 residues: Small ribosomal subunit protein uS10 (104 aa).

Belongs to the universal ribosomal protein uS10 family. Part of the 30S ribosomal subunit.

In terms of biological role, involved in the binding of tRNA to the ribosomes. The chain is Small ribosomal subunit protein uS10 from Gloeobacter violaceus (strain ATCC 29082 / PCC 7421).